Reading from the N-terminus, the 542-residue chain is Putative sodium-dependent excitatory amino acid transporter glt-6 (542 aa).

The Cytoplasmic segment spans residues 1 to 15 (MKSKRRDDIVQFCRE). 3 consecutive transmembrane segments (helical) span residues 16–36 (NTLL…GFGL), 55–75 (IFMQ…LISA), and 93–113 (LYYL…VTVI). At 114 to 191 (HPGDPSIKGT…IVKRSIGMTK (78 aa)) the chain is on the extracellular side. Asn-175 is a glycosylation site (N-linked (GlcNAc...) asparagine). 5 helical membrane-spanning segments follow: residues 192 to 212 (GMNI…ISQL), 234 to 254 (VVTL…GNLL), 265 to 285 (VLAL…IITV), 303 to 323 (GMIQ…TLPM), and 386 to 406 (TIAS…LLIL). Over residues 505–517 (RIGSRIGSRRPSS) the composition is skewed to low complexity. Residues 505 to 542 (RIGSRIGSRRPSSTNLHLSWRNNNIEPPYTPLPNDENV) are disordered. Residues 518–529 (TNLHLSWRNNNI) are compositionally biased toward polar residues.

The protein belongs to the dicarboxylate/amino acid:cation symporter (DAACS) (TC 2.A.23) family.

Its subcellular location is the membrane. The polypeptide is Putative sodium-dependent excitatory amino acid transporter glt-6 (glt-6) (Caenorhabditis elegans).